We begin with the raw amino-acid sequence, 181 residues long: uncharacterized protein (181 aa).

Residues 162 to 181 (QARGPAGTRTPQRRCSSHEA) are disordered.

This is an uncharacterized protein from Homo sapiens (Human).